A 449-amino-acid chain; its full sequence is Baeyer-Villiger oxidase GME11358 (449 aa).

This sequence belongs to the questin oxidase family.

It functions in the pathway secondary metabolite biosynthesis. Baeyer-Villiger oxidase; part of the gene cluster that mediates the biosynthesis of dibenzodioxocinones such as pestalotiollide B, a novel class of inhibitors against cholesterol ester transfer protein (CEPT). The biosynthesis initiates from condensation of acetate and malonate units catalyzed by the non-reducing PKS pks8/GME11356. Pks8/GME11356 lacks a thioesterase (TE) domain, which is important to the cyclizing of the third ring of atrochrysone carboxylic acid, and the esterase GME11355 might play the role of TE and catalyzes the cyclization reaction of the C ring. The lactamase-like protein GME11357 (or other beta-lactamases in Pestalotiopsis microspora) probably hydrolyzes the thioester bond between the ACP of pks8/GME11356 and the intermediate to release atrochrysone carboxylic acid, which is spontaneously dehydrates to form endocrocin anthrone. Endocrocin anthrone is further converted to emodin via the endocrocin intermediate. Emodin is then oxidized by several enzymes such as the Baeyer-Villiger oxidase GME11358, the oxidoreductase GME11367, the short chain dehydrogenase/reductase GME11373, as well as by other oxidoreductases from the cluster, to modify the A and C rings and open the B ring, and finally yield monodictyphenone. The prenyltransferase GME11375 may catalyze the addition reaction between the C5 side chains and the carbon bone of dibenzodioxocinones. The remaining biochemical reactions to the final product dibenzodioxocinones should be methylation catalyzed by methyltransferase GME11366 and reduction and lactonization reaction catalyzed by a series of oxidordeuctases. This chain is Baeyer-Villiger oxidase GME11358, found in Pestalotiopsis microspora.